A 185-amino-acid polypeptide reads, in one-letter code: Ribosome-recycling factor (185 aa).

The protein belongs to the RRF family.

Its subcellular location is the cytoplasm. Its function is as follows. Responsible for the release of ribosomes from messenger RNA at the termination of protein biosynthesis. May increase the efficiency of translation by recycling ribosomes from one round of translation to another. The polypeptide is Ribosome-recycling factor (Novosphingobium aromaticivorans (strain ATCC 700278 / DSM 12444 / CCUG 56034 / CIP 105152 / NBRC 16084 / F199)).